The primary structure comprises 87 residues: Small ribosomal subunit protein bS20 (87 aa).

Basic residues predominate over residues 1–11; that stretch reads MANHKSALKRI. Positions 1-23 are disordered; that stretch reads MANHKSALKRIKQTEKRTERNRH.

This sequence belongs to the bacterial ribosomal protein bS20 family.

Binds directly to 16S ribosomal RNA. This chain is Small ribosomal subunit protein bS20, found in Geotalea uraniireducens (strain Rf4) (Geobacter uraniireducens).